Here is a 317-residue protein sequence, read N- to C-terminus: ATP synthase gamma chain (317 aa).

It belongs to the ATPase gamma chain family. As to quaternary structure, F-type ATPases have 2 components, CF(1) - the catalytic core - and CF(0) - the membrane proton channel. CF(1) has five subunits: alpha(3), beta(3), gamma(1), delta(1), epsilon(1). CF(0) has three main subunits: a, b and c.

The protein localises to the cellular thylakoid membrane. Functionally, produces ATP from ADP in the presence of a proton gradient across the membrane. The gamma chain is believed to be important in regulating ATPase activity and the flow of protons through the CF(0) complex. The polypeptide is ATP synthase gamma chain (Synechococcus sp. (strain CC9311)).